Reading from the N-terminus, the 513-residue chain is Fumarate reductase (513 aa).

41–55 (AIVIGGGLAGLSATN) contributes to the FAD binding site. At serine 100 the chain carries Phosphoserine. Active-site residues include histidine 288 and arginine 311.

This sequence belongs to the FAD-dependent oxidoreductase 2 family. FRD/SDH subfamily. FAD serves as cofactor.

Its subcellular location is the cytoplasm. The protein localises to the mitochondrion. The protein resides in the nucleus. It catalyses the reaction succinate + NAD(+) = fumarate + NADH + H(+). Its function is as follows. Irreversibly catalyzes the reduction of fumarate to succinate. In Schizosaccharomyces pombe (strain 972 / ATCC 24843) (Fission yeast), this protein is Fumarate reductase (osm1).